Reading from the N-terminus, the 228-residue chain is 2,3-bisphosphoglycerate-dependent phosphoglycerate mutase (228 aa).

Substrate contacts are provided by residues 8–15 (RHGQSVWN), 21–22 (TG), arginine 60, 87–90 (ERHY), lysine 98, 114–115 (RR), and 183–184 (GN). The active-site Tele-phosphohistidine intermediate is the histidine 9. Glutamate 87 serves as the catalytic Proton donor/acceptor.

This sequence belongs to the phosphoglycerate mutase family. BPG-dependent PGAM subfamily.

The enzyme catalyses (2R)-2-phosphoglycerate = (2R)-3-phosphoglycerate. Its pathway is carbohydrate degradation; glycolysis; pyruvate from D-glyceraldehyde 3-phosphate: step 3/5. Functionally, catalyzes the interconversion of 2-phosphoglycerate and 3-phosphoglycerate. The sequence is that of 2,3-bisphosphoglycerate-dependent phosphoglycerate mutase from Staphylococcus saprophyticus subsp. saprophyticus (strain ATCC 15305 / DSM 20229 / NCIMB 8711 / NCTC 7292 / S-41).